A 141-amino-acid polypeptide reads, in one-letter code: Venom protein family 1 protein 1 (141 aa).

Residues 1-17 (MKSFIVVLCCLFAITYG) form the signal peptide. Cysteines 62 and 139 form a disulfide.

Belongs to the insect vpf1 family. Expressed by the venom gland (posterior main gland) (at protein level).

The protein resides in the secreted. This chain is Venom protein family 1 protein 1, found in Platymeris rhadamanthus (Red spot assassin bug).